Consider the following 234-residue polypeptide: Cyclo(L-leucyl-L-leucyl) synthase (234 aa).

The Nucleophile role is filled by S33. Residues N36, 179-183 (YIFAE), Y203, and 208-209 (SI) each bind substrate.

The protein belongs to the CDPS family.

The catalysed reaction is 2 L-leucyl-tRNA(Leu) = cyclo(L-leucyl-L-leucyl) + 2 tRNA(Leu) + 2 H(+). In terms of biological role, it uses activated amino acids in the form of aminoacyl-tRNAs (aa-tRNAs) as substrates to catalyze the ATP-independent formation of cyclodipeptides which are intermediates in diketopiperazine (DKP) biosynthetic pathways. Catalyzes the formation of cyclo(L-Leu-L-Leu) (cLL) from L-leucyl-tRNA(Leu). Can incorporate various nonpolar residues, such as L-phenylalanine, L-leucine and L-methionine, into cyclodipeptides. The sequence is that of Cyclo(L-leucyl-L-leucyl) synthase from Photorhabdus laumondii subsp. laumondii (strain DSM 15139 / CIP 105565 / TT01) (Photorhabdus luminescens subsp. laumondii).